We begin with the raw amino-acid sequence, 121 residues long: Chorion class CA protein ERA.4 (121 aa).

Positions 1–23 are cleaved as a signal peptide; sequence MSSSFFCFFLFCFQTCLIQNVYS. The interval 24-57 is left arm; sequence QCLGRVGPGGPPLGPYGGPLGGPGYGPVGYGGCG. The tract at residues 58 to 105 is central domain; that stretch reads GYGGSGIGNVAVAGELPVAGSAAVLGQVPVIGAVEFAGPACAVGSVSI. Residues 106–121 form a right arm region; it reads SGACGPTCGCGGSPYY.

This sequence belongs to the chorion protein family.

Functionally, this protein is one of many from the eggshell of the silk moth. This chain is Chorion class CA protein ERA.4 (ERA.4), found in Bombyx mori (Silk moth).